A 598-amino-acid polypeptide reads, in one-letter code: Urease subunit alpha (598 aa).

Ni(2+) contacts are provided by His141, His143, and Lys223. Lys223 carries the post-translational modification N6-carboxylysine. Position 225 (His225) interacts with substrate. Positions 252 and 278 each coordinate Ni(2+). Residue His326 is the Proton donor of the active site. Asp366 is a binding site for Ni(2+).

It belongs to the metallo-dependent hydrolases superfamily. Urease alpha subunit family. Heterotrimer of UreA (gamma), UreB (beta) and UreC (alpha) subunits. Three heterotrimers associate to form the active enzyme. Ni cation is required as a cofactor. In terms of processing, carboxylation allows a single lysine to coordinate two nickel ions.

It is found in the cytoplasm. It catalyses the reaction urea + 2 H2O + H(+) = hydrogencarbonate + 2 NH4(+). Its pathway is nitrogen metabolism; urea degradation; CO(2) and NH(3) from urea (urease route): step 1/1. This is Urease subunit alpha from Ureaplasma parvum serovar 3 (strain ATCC 27815 / 27 / NCTC 11736).